Here is a 275-residue protein sequence, read N- to C-terminus: 3-methyl-2-oxobutanoate hydroxymethyltransferase (275 aa).

Aspartate 49 and aspartate 88 together coordinate Mg(2+). Residues 49-50 (DS), aspartate 88, and lysine 118 each bind 3-methyl-2-oxobutanoate. Glutamate 120 is a Mg(2+) binding site. The Proton acceptor role is filled by glutamate 187.

This sequence belongs to the PanB family. Homodecamer; pentamer of dimers. Mg(2+) is required as a cofactor.

The protein localises to the cytoplasm. The enzyme catalyses 3-methyl-2-oxobutanoate + (6R)-5,10-methylene-5,6,7,8-tetrahydrofolate + H2O = 2-dehydropantoate + (6S)-5,6,7,8-tetrahydrofolate. It functions in the pathway cofactor biosynthesis; (R)-pantothenate biosynthesis; (R)-pantoate from 3-methyl-2-oxobutanoate: step 1/2. Its function is as follows. Catalyzes the reversible reaction in which hydroxymethyl group from 5,10-methylenetetrahydrofolate is transferred onto alpha-ketoisovalerate to form ketopantoate. The sequence is that of 3-methyl-2-oxobutanoate hydroxymethyltransferase from Brucella suis (strain ATCC 23445 / NCTC 10510).